A 377-amino-acid polypeptide reads, in one-letter code: Protein-glutamate methylesterase/protein-glutamine glutaminase 1 (377 aa).

Residues 4–121 (KVLVVDDSSF…ARNRDEAVTL (118 aa)) enclose the Response regulatory domain. The residue at position 55 (Asp55) is a 4-aspartylphosphate. A disordered region spans residues 138–170 (RPAAPRPAPTTSIAASSSLSQERAAATSPLGNR). The segment covering 146-157 (PTTSIAASSSLS) has biased composition (low complexity). One can recognise a CheB-type methylesterase domain in the interval 184-377 (SGKKYQLTAI…ERMLVEVGLA (194 aa)). Residues Ser196, His223, and Asp319 contribute to the active site.

Belongs to the CheB family. Post-translationally, phosphorylated by CheA. Phosphorylation of the N-terminal regulatory domain activates the methylesterase activity.

The protein resides in the cytoplasm. It carries out the reaction [protein]-L-glutamate 5-O-methyl ester + H2O = L-glutamyl-[protein] + methanol + H(+). The enzyme catalyses L-glutaminyl-[protein] + H2O = L-glutamyl-[protein] + NH4(+). In terms of biological role, involved in chemotaxis. Part of a chemotaxis signal transduction system that modulates chemotaxis in response to various stimuli. Catalyzes the demethylation of specific methylglutamate residues introduced into the chemoreceptors (methyl-accepting chemotaxis proteins or MCP) by CheR. Also mediates the irreversible deamidation of specific glutamine residues to glutamic acid. The protein is Protein-glutamate methylesterase/protein-glutamine glutaminase 1 of Vibrio cholerae serotype O1 (strain ATCC 39315 / El Tor Inaba N16961).